A 333-amino-acid chain; its full sequence is Glycerol-3-phosphate dehydrogenase [NAD(P)+] (333 aa).

Positions 13, 33, and 108 each coordinate NADPH. Sn-glycerol 3-phosphate contacts are provided by K108 and G138. An NADPH-binding site is contributed by S142. Sn-glycerol 3-phosphate-binding residues include K193, D246, S256, R257, and N258. K193 (proton acceptor) is an active-site residue. R257 serves as a coordination point for NADPH. NADPH is bound by residues V281 and E283.

The protein belongs to the NAD-dependent glycerol-3-phosphate dehydrogenase family.

Its subcellular location is the cytoplasm. It catalyses the reaction sn-glycerol 3-phosphate + NAD(+) = dihydroxyacetone phosphate + NADH + H(+). The catalysed reaction is sn-glycerol 3-phosphate + NADP(+) = dihydroxyacetone phosphate + NADPH + H(+). Its pathway is membrane lipid metabolism; glycerophospholipid metabolism. In terms of biological role, catalyzes the reduction of the glycolytic intermediate dihydroxyacetone phosphate (DHAP) to sn-glycerol 3-phosphate (G3P), the key precursor for phospholipid synthesis. The sequence is that of Glycerol-3-phosphate dehydrogenase [NAD(P)+] from Bifidobacterium longum (strain DJO10A).